We begin with the raw amino-acid sequence, 434 residues long: Pre-B-cell leukemia transcription factor 3 (434 aa).

The tract at residues 20-41 is disordered; that stretch reads SVQGGMALPPPPHGHEGADGDG. Over residues 32 to 41 the composition is skewed to basic and acidic residues; that stretch reads HGHEGADGDG. The PBC domain occupies 41 to 234; that stretch reads GRKQDIGDIL…VMILRSRFLD (194 aa). A PBC-A region spans residues 48 to 127; it reads DILHQIMTIT…EGVSGPEKGG (80 aa). The PBC-B stretch occupies residues 130-234; the sequence is AAAAAAAAAS…VMILRSRFLD (105 aa). A DNA-binding region (homeobox; TALE-type) is located at residues 235–297; it reads ARRKRRNFSK…NKRIRYKKNI (63 aa). The span at 326–341 shows a compositional bias: low complexity; sequence NQTNSPTTPNSGSSGS. Disordered regions lie at residues 326–349 and 403–434; these read NQTNSPTTPNSGSSGSFNLPNSGD and LNANGGWQDATTPSSVTSPTEGPGSVHSDTSN. Residues 403–422 are compositionally biased toward polar residues; that stretch reads LNANGGWQDATTPSSVTSPT.

Belongs to the TALE/PBX homeobox family. As to quaternary structure, interacts with PBXIP1. As to expression, ubiquitously expressed.

The protein resides in the nucleus. In terms of biological role, transcriptional activator that binds the sequence 5'-ATCAATCAA-3'. In Homo sapiens (Human), this protein is Pre-B-cell leukemia transcription factor 3 (PBX3).